A 316-amino-acid polypeptide reads, in one-letter code: Apolipoprotein E (316 aa).

Residues 1-18 (MKVLWAALVVTLLAGCGA) form the signal peptide. A run of 8 repeats spans residues 83–104 (ALMD…EQLG), 105–126 (PVTE…ARLG), 127–148 (ADME…AMVG), 149–170 (QSTE…KRLL), 171–192 (RDAE…EGAA), 193–214 (RSVN…TVHT), 215–232 (LVSK…QRLR), and 233–254 (GRLE…EQVQ). Residues 83–254 (ALMDDTMKEV…RLDEVREQVQ (172 aa)) are 8 X 22 AA approximate tandem repeats. Residues 161 to 171 (HLRKLRKRLLR) are LDL and other lipoprotein receptors binding. 165-168 (LRKR) is a heparin binding site. Residues 213 to 289 (HTLVSKPLQE…SWFEPLVQDM (77 aa)) form a lipid-binding and lipoprotein association region. Heparin is bound at residue 228-235 (AQRLRGRL). The interval 265 to 316 (NQVRLQAEAFQGRLKSWFEPLVQDMQQKWAELVEKVQLAVGAVPTSVPSEKQ) is homooligomerization. Residues 277–289 (RLKSWFEPLVQDM) form a specificity for association with VLDL region.

It belongs to the apolipoprotein A1/A4/E family. In terms of assembly, homotetramer. May interact with ABCA1; functionally associated with ABCA1 in the biogenesis of HDLs. May interact with APP/A4 amyloid-beta peptide; the interaction is extremely stable in vitro but its physiological significance is unclear. May interact with MAPT. May interact with MAP2. In the cerebrospinal fluid, interacts with secreted SORL1. Interacts with PMEL; this allows the loading of PMEL luminal fragment on ILVs to induce fibril nucleation. APOE exists as multiple glycosylated and sialylated glycoforms within cells and in plasma. The extent of glycosylation and sialylation are tissue and context specific. In terms of processing, glycated in plasma VLDL. Post-translationally, phosphorylated by FAM20C in the extracellular medium.

The protein resides in the secreted. It is found in the extracellular space. Its subcellular location is the extracellular matrix. It localises to the extracellular vesicle. The protein localises to the endosome. The protein resides in the multivesicular body. In terms of biological role, APOE is an apolipoprotein, a protein associating with lipid particles, that mainly functions in lipoprotein-mediated lipid transport between organs via the plasma and interstitial fluids. APOE is a core component of plasma lipoproteins and is involved in their production, conversion and clearance. Apolipoproteins are amphipathic molecules that interact both with lipids of the lipoprotein particle core and the aqueous environment of the plasma. As such, APOE associates with chylomicrons, chylomicron remnants, very low density lipoproteins (VLDL) and intermediate density lipoproteins (IDL) but shows a preferential binding to high-density lipoproteins (HDL). It also binds a wide range of cellular receptors including the LDL receptor/LDLR and the very low-density lipoprotein receptor/VLDLR that mediate the cellular uptake of the APOE-containing lipoprotein particles. Finally, APOE also has a heparin-binding activity and binds heparan-sulfate proteoglycans on the surface of cells, a property that supports the capture and the receptor-mediated uptake of APOE-containing lipoproteins by cells. This is Apolipoprotein E (APOE) from Diceros bicornis (Black rhinoceros).